Here is a 171-residue protein sequence, read N- to C-terminus: Large ribosomal subunit protein uL10 (171 aa).

Belongs to the universal ribosomal protein uL10 family. Part of the ribosomal stalk of the 50S ribosomal subunit. The N-terminus interacts with L11 and the large rRNA to form the base of the stalk. The C-terminus forms an elongated spine to which L12 dimers bind in a sequential fashion forming a multimeric L10(L12)X complex.

Its function is as follows. Forms part of the ribosomal stalk, playing a central role in the interaction of the ribosome with GTP-bound translation factors. In Nitrosomonas eutropha (strain DSM 101675 / C91 / Nm57), this protein is Large ribosomal subunit protein uL10.